A 91-amino-acid polypeptide reads, in one-letter code: Small ribosomal subunit protein uS19 (91 aa).

This sequence belongs to the universal ribosomal protein uS19 family.

Functionally, protein S19 forms a complex with S13 that binds strongly to the 16S ribosomal RNA. The sequence is that of Small ribosomal subunit protein uS19 from Colwellia psychrerythraea (strain 34H / ATCC BAA-681) (Vibrio psychroerythus).